A 486-amino-acid polypeptide reads, in one-letter code: Bifunctional protein HldE (486 aa).

Residues 1 to 329 (MSSRLSGLLD…AALSVAGPVG (329 aa)) form a ribokinase region. Position 204–207 (204–207 (NAFE)) interacts with ATP. The active site involves Asp274. Positions 355 to 486 (FTNGCFDILH…AIIARSETGK (132 aa)) are cytidylyltransferase.

The protein in the N-terminal section; belongs to the carbohydrate kinase PfkB family. It in the C-terminal section; belongs to the cytidylyltransferase family. Homodimer.

It catalyses the reaction D-glycero-beta-D-manno-heptose 7-phosphate + ATP = D-glycero-beta-D-manno-heptose 1,7-bisphosphate + ADP + H(+). The enzyme catalyses D-glycero-beta-D-manno-heptose 1-phosphate + ATP + H(+) = ADP-D-glycero-beta-D-manno-heptose + diphosphate. The protein operates within nucleotide-sugar biosynthesis; ADP-L-glycero-beta-D-manno-heptose biosynthesis; ADP-L-glycero-beta-D-manno-heptose from D-glycero-beta-D-manno-heptose 7-phosphate: step 1/4. It participates in nucleotide-sugar biosynthesis; ADP-L-glycero-beta-D-manno-heptose biosynthesis; ADP-L-glycero-beta-D-manno-heptose from D-glycero-beta-D-manno-heptose 7-phosphate: step 3/4. Its function is as follows. Catalyzes the phosphorylation of D-glycero-D-manno-heptose 7-phosphate at the C-1 position to selectively form D-glycero-beta-D-manno-heptose-1,7-bisphosphate. Catalyzes the ADP transfer from ATP to D-glycero-beta-D-manno-heptose 1-phosphate, yielding ADP-D-glycero-beta-D-manno-heptose. The sequence is that of Bifunctional protein HldE from Hyphomonas neptunium (strain ATCC 15444).